The primary structure comprises 260 residues: 3'-5' ssDNA/RNA exonuclease TatD (260 aa).

3 residues coordinate a divalent metal cation: E91, H127, and H152.

The protein belongs to the metallo-dependent hydrolases superfamily. TatD-type hydrolase family. TatD subfamily. As to quaternary structure, monomer. It depends on Mg(2+) as a cofactor.

It is found in the cytoplasm. In terms of biological role, 3'-5' exonuclease that prefers single-stranded DNA and RNA. May play a role in the H(2)O(2)-induced DNA damage repair. This is 3'-5' ssDNA/RNA exonuclease TatD from Shigella flexneri serotype 5b (strain 8401).